The primary structure comprises 485 residues: Expansin-like protein 8 (485 aa).

Residues 1-21 form the signal peptide; that stretch reads MRISIILLSLLFLSLHSLIKA. The Extracellular segment spans residues 22–464; that stretch reads DITKLSVCGS…QSGHHASSNT (443 aa). The 114-residue stretch at 26-139 folds into the Expansin-like EG45 domain; that stretch reads LSVCGSARAV…QIVSCGYSGN (114 aa). 2 cysteine pairs are disulfide-bonded: C29-C70 and C73-C134. N-linked (GlcNAc...) asparagine glycans are attached at residues N117 and N365. A disordered region spans residues 408–436; sequence EVNNKPSTTSGTGTTSSKPSSSSGGVSGG. Residues 414 to 431 show a composition bias toward low complexity; sequence STTSGTGTTSSKPSSSSG. Residue N454 is glycosylated (N-linked (GlcNAc...) asparagine). The helical transmembrane segment at 465–485 threads the bilayer; that stretch reads NILLPTTFVFFISITILSLLF.

The protein belongs to the expansin family. Expansin A subfamily.

The protein resides in the membrane. Functionally, may serve to lubricate the movement of the cellulose microfibrils during cell growth and wall extension and/or may serve to maintain the fluid state of the slug cell wall. This Dictyostelium discoideum (Social amoeba) protein is Expansin-like protein 8 (expl8).